Reading from the N-terminus, the 282-residue chain is MKDITLPPPTSASCLTGAISVNTEAVLSPMQHTSALHVRDFASLCSQNLKANVLLNSDDHEVPIHQKNPAAIMQNIDSNIKQMATDWGMSIEEVEVIIGREKGIVEPSCGVTANAIMKLFLDKDGFSYCFENEQTLSLEQLQERLSCMPECKSFVLRVNDGALGHAYIVDIPKGENSCRPAFLYQSDLGEGVTRKLRFEDWMTHKALTPILLDDICNYFSCMSQNKTDLEQIATLFDIDGNVKMLRKENIQYQKHDNFSFQLFEYDTDNIEKNIEIIKSLCS.

Residues 1–16 are translocation domain (TD); that stretch reads MKDITLPPPTSASCLT. Catalysis depends on residues Cys109, His165, and Gln185.

Belongs to the Cif family.

The protein localises to the secreted. Its subcellular location is the host nucleus. It carries out the reaction L-glutaminyl-[protein] + H2O = L-glutamyl-[protein] + NH4(+). Its function is as follows. Protein-glutamine deamidase effector that inhibits the host cell cycle and other key cellular processes such as the actin network and programmed-cell death. Acts by mediating the side chain deamidation of 'Gln-40' of host NEDD8, converting it to glutamate, thereby abolishing the activity of cullin-RING-based E3 ubiquitin-protein ligase complexes (CRL complexes). Inactivation of CRL complexes prevents ubiquitination and subsequent degradation of the cyclin-dependent kinase inhibitors CDKN1A/p21 and CDKN1B/p27, leading to G1 and G2 cell cycle arrests in host cells. Also able to catalyze deamidation of 'Gln-40' of host ubiquitin in vitro; however, NEDD8 constitutes the preferred substrate in vivo. In Escherichia coli, this protein is Protein-glutamine deamidase Cif.